Here is a 326-residue protein sequence, read N- to C-terminus: MSSFSESALEKKLSELSNSQQSVQTLSLWLIHHRKHAGPIVSVWHRELRKAKSNRKLTFLYLANDVIQNSKRKGPEFTREFESVLVDAFSHVAREADEGCKKPLERLLNIWQERSVYGGEFIQQLKLSMEDSKSPPPKAAEEKKSLKRTFQQIQEEEDDDYPGSYSPQDPSAGPLLTEELIKALQDLENAASGDATVRQKIASLPQEVQDVSLLEKITDKEAAERLSKTVDEACLLLAEYNGRLAAELEDRRQLARMLVEYTQNQKEVLSEKEKKLEEYKQKLARVTQVRKELKSHIQSLPDLSLLPNVTGGLAPLPSAGDLFSTD.

Residue serine 2 is modified to N-acetylserine. Residues 2-133 (SSFSESALEK…QLKLSMEDSK (132 aa)) enclose the CID domain. Basic and acidic residues predominate over residues 128 to 144 (SMEDSKSPPPKAAEEKK). The disordered stretch occupies residues 128–148 (SMEDSKSPPPKAAEEKKSLKR). Residues serine 132 and serine 134 each carry the phosphoserine modification. A Phosphotyrosine modification is found at tyrosine 161. Serine 166 and serine 299 each carry phosphoserine.

Belongs to the UPF0400 (RTT103) family. In terms of assembly, homodimer. May form a heterodimer with RPRD1A. Associates with RPAP2. Associates with the RNA polymerase II complex. Widely expressed in the adult with highest levels in liver, colon, prostate and uterus and lowest levels in heart and kidney. Not detected in rectum.

It is found in the nucleus. Its function is as follows. Interacts with phosphorylated C-terminal heptapeptide repeat domain (CTD) of the largest RNA polymerase II subunit POLR2A, and participates in dephosphorylation of the CTD by RPAP2. Transcriptional regulator which enhances expression of CCND1. Promotes binding of RNA polymerase II to the CCDN1 promoter and to the termination region before the poly-A site but decreases its binding after the poly-A site. Prevents RNA polymerase II from reading through the 3' end termination site and may allow it to be recruited back to the promoter through promotion of the formation of a chromatin loop. Also enhances the transcription of a number of other cell cycle-related genes including CDK2, CDK4, CDK6 and cyclin-E but not CDKN1A, CDKN1B or cyclin-A. Promotes cell proliferation. The chain is Regulation of nuclear pre-mRNA domain-containing protein 1B (Rprd1b) from Mus musculus (Mouse).